The following is a 378-amino-acid chain: Putative glutamate--cysteine ligase 2 (378 aa).

Belongs to the glutamate--cysteine ligase type 2 family. YbdK subfamily.

It carries out the reaction L-cysteine + L-glutamate + ATP = gamma-L-glutamyl-L-cysteine + ADP + phosphate + H(+). ATP-dependent carboxylate-amine ligase which exhibits weak glutamate--cysteine ligase activity. This is Putative glutamate--cysteine ligase 2 from Ectopseudomonas mendocina (strain ymp) (Pseudomonas mendocina).